We begin with the raw amino-acid sequence, 218 residues long: DNA-binding protein HU 2 (218 aa).

A bacterial histone-like domain region spans residues M1–S91. Residues V101–K218 are disordered. The tract at residues K118–K218 is degenerate repeats region. The span at K127–T161 shows a compositional bias: low complexity. Residues T162–A172 are compositionally biased toward basic residues. Residues A173–K182 show a composition bias toward low complexity. Positions T183–K218 are enriched in basic residues.

The protein belongs to the bacterial histone-like protein family. Long actinobacterial subfamily. In terms of assembly, homodimer.

It localises to the cytoplasm. It is found in the nucleoid. Functionally, histone-like DNA-binding protein which is capable of wrapping DNA to stabilize it, and thus to prevent its denaturation under extreme environmental conditions. This Streptomyces coelicolor (strain ATCC BAA-471 / A3(2) / M145) protein is DNA-binding protein HU 2 (hup2).